A 224-amino-acid polypeptide reads, in one-letter code: Small ribosomal subunit protein uS3 (224 aa).

The KH type-2 domain maps to 38–106; it reads LREYVKEKLG…EVYLNVVEVR (69 aa).

Belongs to the universal ribosomal protein uS3 family. As to quaternary structure, part of the 30S ribosomal subunit. Forms a tight complex with proteins S10 and S14.

Functionally, binds the lower part of the 30S subunit head. Binds mRNA in the 70S ribosome, positioning it for translation. This is Small ribosomal subunit protein uS3 from Anaeromyxobacter sp. (strain Fw109-5).